Here is a 1033-residue protein sequence, read N- to C-terminus: MKKVDVKESAVGREMRIRKQWNEQNIFEQSIQNREGAQSFVFYEGPPTANGLPHVGHALGRTIKDVVARYKTMAGYKVLRKAGWDTHGLPVELGVEKQLGISGKHEIEEYGIEPFIKKCKESVFTYEKQWREFTESIGYWVDMDDPYVTLENPYIESVWHILGTIHEKGLLYKGHRVSPYCPSCQTSLSSHEVAQGYKTVKDLSATVKFKVKDSENEYFLGWTTTPWTLPANVALAVHPNMEYVKAKQEGHVYIVAKERVQDVLKENYEVLSVHKGEELLNISYTAPFPMKEVTNGYRVIGADFVTADSGTGLVHIAPAYGEDDYRVVQSEGLSFLHVVDEKGEYTEAVPFLKGKFVKDCDVDIVRYLAKEDLLYHKEKYEHSYPHCWRCDSPLLYYAGESWLIRTTAIKDTFLQNNDTVTWYPDHMKHGRFGKFLENMVDWNISRNRYWGTPLNVWECERCDHQFAPKSIADLRKHSMKETPEDLELHKPYVDEVQVCCEKCGSTMNRTPEVIDVWFDSGSMPFAQYHYPFENKELFEEQFPADVIAEGIDQTRGWFYSLLAVSALYTGKVPYKRVLSLGHVLDEEGQKMSKSKGNALDPVDLVGKFGADALRWALLVDSALWNAKRFSERTVLEAKSKFVDTLVNVYSFYVLYANLDEYNPNETYDVKRTKLDEWVLSRLHSTTKKVRTALDDYQFTNAAREIAALVDEVSNWYVRRSRNRFWESGMNAEKAAAYETLHDVLVTISKLIAPFTPFVAEDVHLNLTGSSVHLEDYPVVNESLLQPKLEAEMDAVLQVVELGRSNRNQHSLKVKQPLAELVLLEHNENDMDWESYRDIVMDELNVKAFHVELDETKYTSYQLKLNFKKAGPKFGKNVNAVNGWLKQLSQDEVQNFVSTERAVYEVAPGEEIVVTTEDVLVEKVAKSGFSNTTNGQYTVMLDTNVTEELLQEGVAREFIRAVQEYRKQLNLPVNLRVDVILDTEEELQQTLTNHKELLEENLLVKQFTFGHLTNEDDELSLGETKVRIKLSTAQ.

A 'HIGH' region motif is present at residues 47–57; it reads PTANGLPHVGH. The 'KMSKS' region signature appears at 590–594; sequence KMSKS. Residue K593 participates in ATP binding.

This sequence belongs to the class-I aminoacyl-tRNA synthetase family. IleS type 2 subfamily. Monomer. Requires Zn(2+) as cofactor.

Its subcellular location is the cytoplasm. The catalysed reaction is tRNA(Ile) + L-isoleucine + ATP = L-isoleucyl-tRNA(Ile) + AMP + diphosphate. Functionally, catalyzes the attachment of isoleucine to tRNA(Ile). As IleRS can inadvertently accommodate and process structurally similar amino acids such as valine, to avoid such errors it has two additional distinct tRNA(Ile)-dependent editing activities. One activity is designated as 'pretransfer' editing and involves the hydrolysis of activated Val-AMP. The other activity is designated 'posttransfer' editing and involves deacylation of mischarged Val-tRNA(Ile). The polypeptide is Isoleucine--tRNA ligase 2 (Bacillus anthracis).